We begin with the raw amino-acid sequence, 242 residues long: DNA repair protein RecO (242 aa).

The protein belongs to the RecO family.

In terms of biological role, involved in DNA repair and RecF pathway recombination. The polypeptide is DNA repair protein RecO (Dechloromonas aromatica (strain RCB)).